A 236-amino-acid polypeptide reads, in one-letter code: NAP1-binding protein 2 (236 aa).

A Phosphoserine modification is found at S102. An SH3 domain is found at 110-171 (IVNQRAVALY…PEEFVSYIQP (62 aa)). S196 and S235 each carry phosphoserine.

Interacts with PBS2 and PTC1.

It localises to the cytoplasm. Negatively regulates the high-osmolarity glycerol (HOG) pathway through its negative regulation of the HOG1 kinase activity. Mediates the binding between the PTC1 phosphatase and the PBS2 MAP/ERK kinase (MEK). With PTC1, regulates endoplasmic reticulum inheritance through the cell wall integrity (CWI) MAPK pathway by modulating the MAPK, SLT2. The sequence is that of NAP1-binding protein 2 (NBP2) from Saccharomyces cerevisiae (strain ATCC 204508 / S288c) (Baker's yeast).